A 624-amino-acid chain; its full sequence is Phragmoplastin DRP1E (624 aa).

The residue at position 2 (Thr2) is an N-acetylthreonine. One can recognise a Dynamin-type G domain in the interval 37–306; sequence WEALPTVAVV…LESVIRTRIP (270 aa). Residues 47-54 are G1 motif; sequence GGQSSGKS. GTP is bound at residue 50–55; sequence SSGKSS. The G2 motif stretch occupies residues 73-75; the sequence is VTR. Residues 148–151 form a G3 motif region; sequence DLPG. Residues 217 to 220 are G4 motif; it reads TKLD. Residues 218-223 and 248-251 each bind GTP; these read KLDLMD and NRSQ. The segment at 247–250 is G5 motif; it reads VNRS. The 93-residue stretch at 532–624 folds into the GED domain; it reads FRRIASNVSA…DEIDAVAWVR (93 aa).

Belongs to the TRAFAC class dynamin-like GTPase superfamily. Dynamin/Fzo/YdjA family. In terms of assembly, forms homodimer and may homooligomerize and heterooligomerize to form the phragmoplastin complex. Binds to PHIP1. In terms of tissue distribution, ubiquitous.

The protein localises to the cytoplasm. Its subcellular location is the cytoskeleton. It is found in the phragmoplast. The catalysed reaction is GTP + H2O = GDP + phosphate + H(+). In terms of biological role, microtubule-associated force-producing protein that is targeted to the tubulo-vesicular network of the forming cell plate during cytokinesis. Also plays a major role in plasma membrane maintenance and cell wall integrity with an implication in vesicular trafficking, polar cell expansion, and other aspects of plant growth and development. Has a GTPase activity. The chain is Phragmoplastin DRP1E from Arabidopsis thaliana (Mouse-ear cress).